The chain runs to 206 residues: Cytochrome c biogenesis ATP-binding export protein CcmA (206 aa).

Residues 3-206 (VSVDDLCVTR…LAGASDEAFL (204 aa)) enclose the ABC transporter domain. 35–42 (GPNGSGKT) contacts ATP.

It belongs to the ABC transporter superfamily. CcmA exporter (TC 3.A.1.107) family. The complex is composed of two ATP-binding proteins (CcmA) and two transmembrane proteins (CcmB).

It is found in the cell inner membrane. The enzyme catalyses heme b(in) + ATP + H2O = heme b(out) + ADP + phosphate + H(+). Functionally, part of the ABC transporter complex CcmAB involved in the biogenesis of c-type cytochromes; once thought to export heme, this seems not to be the case, but its exact role is uncertain. Responsible for energy coupling to the transport system. This is Cytochrome c biogenesis ATP-binding export protein CcmA from Roseobacter denitrificans (strain ATCC 33942 / OCh 114) (Erythrobacter sp. (strain OCh 114)).